A 275-amino-acid polypeptide reads, in one-letter code: Large ribosomal subunit protein uL2 (275 aa).

A disordered region spans residues Val220–Arg275. Residues Pro227–Ala239 are compositionally biased toward basic and acidic residues. A compositionally biased stretch (basic residues) spans Lys249–Asn262.

This sequence belongs to the universal ribosomal protein uL2 family. As to quaternary structure, part of the 50S ribosomal subunit. Forms a bridge to the 30S subunit in the 70S ribosome.

One of the primary rRNA binding proteins. Required for association of the 30S and 50S subunits to form the 70S ribosome, for tRNA binding and peptide bond formation. It has been suggested to have peptidyltransferase activity; this is somewhat controversial. Makes several contacts with the 16S rRNA in the 70S ribosome. The chain is Large ribosomal subunit protein uL2 from Roseiflexus sp. (strain RS-1).